Consider the following 432-residue polypeptide: Phosphomethylpyrimidine synthase (432 aa).

Substrate-binding positions include N66, M95, Y124, H163, 185–187, 226–229, and E265; these read SRG and DGLR. H269 contacts Zn(2+). Residue Y292 coordinates substrate. H333 contacts Zn(2+). Residues C409, C412, and C416 each contribute to the [4Fe-4S] cluster site.

It belongs to the ThiC family. [4Fe-4S] cluster serves as cofactor.

It carries out the reaction 5-amino-1-(5-phospho-beta-D-ribosyl)imidazole + S-adenosyl-L-methionine = 4-amino-2-methyl-5-(phosphooxymethyl)pyrimidine + CO + 5'-deoxyadenosine + formate + L-methionine + 3 H(+). Its pathway is cofactor biosynthesis; thiamine diphosphate biosynthesis. Its function is as follows. Catalyzes the synthesis of the hydroxymethylpyrimidine phosphate (HMP-P) moiety of thiamine from aminoimidazole ribotide (AIR) in a radical S-adenosyl-L-methionine (SAM)-dependent reaction. The protein is Phosphomethylpyrimidine synthase of Thermoanaerobacter pseudethanolicus (strain ATCC 33223 / 39E) (Clostridium thermohydrosulfuricum).